We begin with the raw amino-acid sequence, 145 residues long: Large ribosomal subunit protein bL19 (145 aa).

A compositionally biased stretch (basic and acidic residues) spans 112–130; the sequence is GKSARIKERRPAKAVEKTS. The tract at residues 112–145 is disordered; it reads GKSARIKERRPAKAVEKTSKPASAKKPAAKANKK.

Belongs to the bacterial ribosomal protein bL19 family.

This protein is located at the 30S-50S ribosomal subunit interface and may play a role in the structure and function of the aminoacyl-tRNA binding site. The polypeptide is Large ribosomal subunit protein bL19 (Malacoplasma penetrans (strain HF-2) (Mycoplasma penetrans)).